Consider the following 450-residue polypeptide: Tubulin alpha chain (450 aa).

Residue glutamine 11 coordinates GTP. Lysine 40 is subject to N6-acetyllysine. 7 residues coordinate GTP: glutamate 71, serine 140, glycine 144, threonine 145, threonine 179, asparagine 206, and asparagine 228. Position 71 (glutamate 71) interacts with Mg(2+). Glutamate 254 is a catalytic residue.

This sequence belongs to the tubulin family. In terms of assembly, dimer of alpha and beta chains. A typical microtubule is a hollow water-filled tube with an outer diameter of 25 nm and an inner diameter of 15 nM. Alpha-beta heterodimers associate head-to-tail to form protofilaments running lengthwise along the microtubule wall with the beta-tubulin subunit facing the microtubule plus end conferring a structural polarity. Microtubules usually have 13 protofilaments but different protofilament numbers can be found in some organisms and specialized cells. Requires Mg(2+) as cofactor. Post-translationally, acetylation of alpha chains at Lys-40 stabilizes microtubules and affects affinity and processivity of microtubule motors. This modification has a role in multiple cellular functions, ranging from cell motility, cell cycle progression or cell differentiation to intracellular trafficking and signaling.

Its subcellular location is the cytoplasm. The protein localises to the cytoskeleton. The catalysed reaction is GTP + H2O = GDP + phosphate + H(+). Its function is as follows. Tubulin is the major constituent of microtubules, a cylinder consisting of laterally associated linear protofilaments composed of alpha- and beta-tubulin heterodimers. Microtubules grow by the addition of GTP-tubulin dimers to the microtubule end, where a stabilizing cap forms. Below the cap, tubulin dimers are in GDP-bound state, owing to GTPase activity of alpha-tubulin. In Euplotes vannus (Marine ciliate), this protein is Tubulin alpha chain.